Reading from the N-terminus, the 422-residue chain is Calpain-2 catalytic subunit (422 aa).

The region spanning 1 to 66 (QKLIRIRNPW…YSRLEICNLT (66 aa)) is the Calpain catalytic domain. Residue asparagine 8 is part of the active site. The Ca(2+) site is built by glutamate 14, aspartate 21, and glutamate 45. The tract at residues 67-236 (PDTLTSDTYK…KKADYQAVDD (170 aa)) is domain III. The interval 237 to 251 (EIEADLEEADVSEDD) is linker. A domain IV region spans residues 252-422 (IDDGFRRLFA…LISWLCFSVL (171 aa)). Residues alanine 264, aspartate 267, glutamate 269, glutamate 274, aspartate 307, aspartate 309, threonine 311, lysine 313, glutamate 318, aspartate 337, aspartate 339, serine 341, threonine 343, glutamate 348, aspartate 380, and asparagine 383 each contribute to the Ca(2+) site. EF-hand domains are found at residues 294–327 (LSIE…TKIQ) and 324–359 (TKIQ…AGFK). An EF-hand 3 domain is found at 389–422 (VRLETLFKIFKQLDPDNTGMIQLDLISWLCFSVL).

This sequence belongs to the peptidase C2 family. Forms a heterodimer with a small (regulatory) subunit (CAPNS1). Interacts with CPEB3; this leads to cleavage of CPEB3. Ca(2+) serves as cofactor. As to expression, ubiquitous.

Its subcellular location is the cytoplasm. The protein localises to the cell membrane. It carries out the reaction Broad endopeptidase specificity.. Its activity is regulated as follows. Activated by 200-1000 micromolar concentrations of calcium and inhibited by calpastatin. Its function is as follows. Calcium-regulated non-lysosomal thiol-protease which catalyzes limited proteolysis of substrates involved in cytoskeletal remodeling and signal transduction. Proteolytically cleaves MYOC at 'Arg-226'. Proteolytically cleaves CPEB3 following neuronal stimulation which abolishes CPEB3 translational repressor activity, leading to translation of CPEB3 target mRNAs. In Oryctolagus cuniculus (Rabbit), this protein is Calpain-2 catalytic subunit (CAPN2).